A 500-amino-acid polypeptide reads, in one-letter code: Glucokinase-1 (500 aa).

At Ser2 the chain carries N-acetylserine. Ser2 carries the phosphoserine modification. A Hexokinase domain is found at 12–498 (RAVIQAVDQI…SGVGAALCAL (487 aa)). The interval 74–216 (NGTERGVLLA…MPMIKVVALT (143 aa)) is hexokinase small subdomain. Residue Lys110 coordinates ATP. The tract at residues 158–184 (KLGFTFSYPVDQTSLNSGTLIRWTKGF) is glucose-binding. Residues 217 to 487 (NDTVGTYLSH…RKVHLKIAKD (271 aa)) are hexokinase large subdomain. Ser470 is modified (phosphoserine). 487–492 (DGSGVG) is an ATP binding site.

Belongs to the hexokinase family. Monomer.

It carries out the reaction D-glucose + ATP = D-glucose 6-phosphate + ADP + H(+). It participates in carbohydrate metabolism; hexose metabolism. Its pathway is carbohydrate degradation; glycolysis; D-glyceraldehyde 3-phosphate and glycerone phosphate from D-glucose: step 1/4. Functionally, two isoenzymes, hexokinase-1 and hexokinase-2, can phosphorylate keto- and aldohexoses in yeast, whereas a third isoenzyme, GLK, is specific for aldohexoses. All glucose phosphorylating enzymes are involved in glucose uptake. The protein is Glucokinase-1 (GLK1) of Saccharomyces cerevisiae (strain ATCC 204508 / S288c) (Baker's yeast).